We begin with the raw amino-acid sequence, 445 residues long: RNA-binding protein asd-2 (445 aa).

Residues 22–63 (TVIPPPPNDSGHEFIGPSSGPPQVTITPSGVQSGSANGVSTS) are disordered. Polar residues predominate over residues 42-63 (PPQVTITPSGVQSGSANGVSTS). The qua1 domain stretch occupies residues 71–128 (EYLSQLLKDKKQLAAFPNVFHHLERLADEEINKVRVVLFQCEFSKESAPLPDAEGDST). In terms of domain architecture, KH spans 145–171 (NFVGRILGPRGMTAKQLEQETGCKIMV). Residues 230-253 (APEGEDDLKRKQLMELAIINGTYR) are qua2 domain; involved in RNA binding.

Interacts with sup-12; in the presence of RNA, but with weak affinity in the absence of RNA. In terms of tissue distribution, isoform b: Expressed in the hypodermis and pharyngeal muscles. Isoform c: Expressed in body wall muscles and phayngeal muscles.

The protein resides in the nucleus. Its function is as follows. RNA-binding protein that binds to the 5'-NACUAAY-N(1,20)-UAAY-3' consensus sequence in pre-mRNA introns to promote alternative splicing. Required for mutually exclusive alternative splicing where it modulates the switch between mutually exclusive exons during pre-mRNA maturation. Involved in muscle-specific gene expression regulating the alternative splicing of genes such as let-2 and unc-60 to ensure that their respective isoforms are expressed in muscle. Promotes the removal of intron 10 from let-2 pre-mRNA to allow for the exclusive expression of the muscle-specific let-2 isoform (as opposed to the non-muscle-specific isoform expressed in embryos) in body wall muscles during late larval and adult stages of development. Binds cooperatively with RNA-binding protein sup-12 to intron 1A of the unc-60 pre-mRNA to promote alternative splicing and expression of the muscle specific isoform of unc-60. The chain is RNA-binding protein asd-2 from Caenorhabditis elegans.